A 40-amino-acid chain; its full sequence is Photosystem II reaction center protein J (40 aa).

A helical membrane pass occupies residues 8 to 28 (IPLWLISTVTGTLVIGLMGIF).

The protein belongs to the PsbJ family. In terms of assembly, PSII is composed of 1 copy each of membrane proteins PsbA, PsbB, PsbC, PsbD, PsbE, PsbF, PsbH, PsbI, PsbJ, PsbK, PsbL, PsbM, PsbT, PsbX, PsbY, PsbZ, Psb30/Ycf12, at least 3 peripheral proteins of the oxygen-evolving complex and a large number of cofactors. It forms dimeric complexes.

It is found in the plastid. The protein localises to the chloroplast thylakoid membrane. One of the components of the core complex of photosystem II (PSII). PSII is a light-driven water:plastoquinone oxidoreductase that uses light energy to abstract electrons from H(2)O, generating O(2) and a proton gradient subsequently used for ATP formation. It consists of a core antenna complex that captures photons, and an electron transfer chain that converts photonic excitation into a charge separation. In Ginkgo biloba (Ginkgo), this protein is Photosystem II reaction center protein J.